We begin with the raw amino-acid sequence, 73 residues long: Large ribosomal subunit protein uL24 (73 aa).

Residues 51-65 (DDNPKGGFIHKEKPM) are compositionally biased toward basic and acidic residues. The disordered stretch occupies residues 51–73 (DDNPKGGFIHKEKPMHISNVKKA).

Belongs to the universal ribosomal protein uL24 family. In terms of assembly, part of the 50S ribosomal subunit.

Its function is as follows. One of two assembly initiator proteins, it binds directly to the 5'-end of the 23S rRNA, where it nucleates assembly of the 50S subunit. Functionally, one of the proteins that surrounds the polypeptide exit tunnel on the outside of the subunit. This is Large ribosomal subunit protein uL24 from Helicobacter pylori (strain Shi470).